Reading from the N-terminus, the 342-residue chain is BAG family molecular chaperone regulator 1 (342 aa).

The interval 1–41 (MMKMMRNKPTNLPTAGMTNGGRGSGGGGGGGGRESGGRDLE) is disordered. Residues 8 to 17 (KPTNLPTAGM) are compositionally biased toward polar residues. Gly residues predominate over residues 18–34 (TNGGRGSGGGGGGGGRE). The 77-residue stretch at 65–141 (PMIRVRIKYG…MVLIEDPLSQ (77 aa)) folds into the Ubiquitin-like domain. One can recognise a BAG domain in the interval 160–238 (AISDISLEVD…NYVETLDALK (79 aa)). The residue at position 298 (Ser-298) is a Phosphoserine.

In terms of assembly, binds to the ATPase domain of HSP70/HSC70 chaperones.

Co-chaperone that regulates diverse cellular pathways, such as programmed cell death and stress responses. This chain is BAG family molecular chaperone regulator 1 (BAG1), found in Arabidopsis thaliana (Mouse-ear cress).